Here is a 750-residue protein sequence, read N- to C-terminus: MMRQYELVERVQRYKPDVNEALLNKAYVYAMQKHGSQKRASGDPYFSHPLEVAAILTDMHLDEATIAIALLHDTIEDTTATRQEIDQLFGPEIGKLVEGLTKLKKLDLVSKKAVQAENLRKLLLAISEDVRVLLVKLADRLHNMRTLGVMREDKRLRIAEETMDIYAPLAGRMGMQDMREELEELAFRYINPDAWRAVTDRLAELLEKNRGLLQKIETDLSEIFEKNGIKASVKSRQKKPWSVFRKMETKGLSFEQLSDIFGFRVMVDTVQDCYRALGLIHTTWSMVPGRFKDYISTPKQNDYRSIHTTIIGPSRQRIELQIRTREMDEIAEFGVAAHSIYKDRGSANNPHKISTETNAYAWLRQTIEQLSEGDNPEEFLEHTKLELFQDQVFCFTPKGRLIALPRGATPIDFAYAVHTDIGDSCVGAKVNGRIMPLMTELKNGDEVDIIRSKAQVPPAAWESLVATGKARAAIRRATRSAVRKQYSGLGMRILERAFERAGKPFSKDILKPGLPRLARKDVEDVLAAVGRGELPSTDVVKAVYPDYQDTRVTTQNNPAKAGEKGWFNIQNAAGMIFKVPEGGEGAAAKVDPAATTPKPGKRALPIRGTNPDLPVRFAPEGAVPGDRIVGILQPGAGITIYPIQSPALTAYDDQPERWIDVRWDIDDQMSERFPARISVSAINSPGSLAEIAQIAAANDANIHNLSMVRTAPDFTEMIIDVEVWDLKHLNRIISQLKESASVSSAKRVNG.

An HD domain is found at 45–144 (YFSHPLEVAA…VKLADRLHNM (100 aa)). The TGS domain maps to 390–451 (DQVFCFTPKG…KNGDEVDIIR (62 aa)). The interval 587–613 (AAKVDPAATTPKPGKRALPIRGTNPDL) is disordered. The 75-residue stretch at 676–750 (RISVSAINSP…SVSSAKRVNG (75 aa)) folds into the ACT domain.

Belongs to the RelA/SpoT family.

The catalysed reaction is GTP + ATP = guanosine 3'-diphosphate 5'-triphosphate + AMP. Functionally, functions as a (p)ppGpp synthase. In eubacteria ppGpp (guanosine 3'-diphosphate 5'-diphosphate) is a mediator of the stringent response that coordinates a variety of cellular activities in response to changes in nutritional abundance. Plays a role in adaptation of Brucella to its intracellular host environment. This is GTP pyrophosphokinase rsh (rsh) from Brucella ovis (strain ATCC 25840 / 63/290 / NCTC 10512).